A 474-amino-acid polypeptide reads, in one-letter code: Alginate biosynthesis protein AlgX (474 aa).

A signal peptide spans 1-26 (MKTRTSRLFRLSALAAGLCLAQAALA). The segment at 27–347 (ADPGAAPSYQ…QAMPLVDNGC (321 aa)) is SGNH hydrolase-like domain. A disulfide bridge connects residues Cys-44 and Cys-229. Asp-174 is an active-site residue. The active-site Proton acceptor is the His-176. Residue Ser-269 is the Nucleophile of the active site. Cys-347 and Cys-460 form a disulfide bridge. A CBM domain region spans residues 348-474 (SGRKTVLSRK…AKASQSVAGR (127 aa)).

The protein belongs to the AlgX family. Monomer. Interacts with AlgK and MucD.

Its subcellular location is the periplasm. Its pathway is glycan biosynthesis; alginate biosynthesis. Functionally, plays two roles in the biosynthesis of the exopolysaccharide alginate: protects alginate from degradation as the polymer traverses the periplasm, and also plays a role in its O-acetylation. Acetylation of alginate causes the cells in the biofilm to adhere better to lung epithelium, form microcolonies, and resist the effects of the host immune system and/or antibiotics. Displays a low acetylesterase activity in vitro using a pseudosubstrate, 3-carboxyumbelliferyl acetate. Probably has acetyltransferase activity in vivo. This chain is Alginate biosynthesis protein AlgX (algX), found in Pseudomonas aeruginosa (strain ATCC 15692 / DSM 22644 / CIP 104116 / JCM 14847 / LMG 12228 / 1C / PRS 101 / PAO1).